A 382-amino-acid chain; its full sequence is 8-amino-7-oxononanoate synthase (382 aa).

Residues R22 and R29 each coordinate substrate. 109 to 110 (GF) serves as a coordination point for pyridoxal 5'-phosphate. H134 is a substrate binding site. Pyridoxal 5'-phosphate-binding positions include S182, 207 to 210 (DDAH), and 233 to 236 (TLSK). At K236 the chain carries N6-(pyridoxal phosphate)lysine. T345 lines the substrate pocket.

It belongs to the class-II pyridoxal-phosphate-dependent aminotransferase family. BioF subfamily. In terms of assembly, homodimer. Requires pyridoxal 5'-phosphate as cofactor.

It carries out the reaction 6-carboxyhexanoyl-[ACP] + L-alanine + H(+) = (8S)-8-amino-7-oxononanoate + holo-[ACP] + CO2. It participates in cofactor biosynthesis; biotin biosynthesis. Catalyzes the decarboxylative condensation of pimeloyl-[acyl-carrier protein] and L-alanine to produce 8-amino-7-oxononanoate (AON), [acyl-carrier protein], and carbon dioxide. This is 8-amino-7-oxononanoate synthase from Granulibacter bethesdensis (strain ATCC BAA-1260 / CGDNIH1).